Reading from the N-terminus, the 641-residue chain is Epithelial sodium channel subunit beta (641 aa).

The Cytoplasmic segment spans residues 1–50; it reads MHLKKYLLKGLHRLQKGPGYSYKELLVWYCNNTNTHGPKRIICEGPKKKA. Residues 51–71 form a helical membrane-spanning segment; sequence MWFLITLLFTSLVCWQWGVFI. Residues 72 to 533 are Extracellular-facing; it reads RTYLSWEVSV…GGQFGFWMGG (462 aa). 9 cysteine pairs are disulfide-bonded: C98/C273, C185/C190, C197/C204, C250/C257, C362/C449, C387/C445, C391/C441, C400/C427, and C402/C416. N-linked (GlcNAc...) asparagine glycosylation occurs at N141. An N-linked (GlcNAc...) asparagine glycan is attached at N261. The helical transmembrane segment at 534–554 threads the bilayer; that stretch reads SVLCLIEFGEILIDFVWITII. Over 555 to 641 the chain is Cytoplasmic; sequence KLVAFAKSLR…IESDSEGDAI (87 aa). A disordered region spans residues 593 to 624; it reads PDVARPGPDPGTYPDEQTLPIPGTPPPNYDSL. The PY motif; recruits WW domain-containing proteins and is thereby required for ubiquitination and inhibition of the channel by NEDD4 and NEDD4L signature appears at 617–621; sequence PPPNY. S634 and S636 each carry phosphoserine.

It belongs to the amiloride-sensitive sodium channel (TC 1.A.6) family. SCNN1B subfamily. Component of the heterotrimeric epithelial sodium channel (ENaC) composed of an alpha/SCNN1A, a beta/SCNN1B and a gamma/SCNN1G subunit. An additional delta/SCNN1D subunit can replace the alpha/SCNN1A subunit to form an alternative channel with specific properties. Interacts with WWP1 (via WW domains). Interacts with WWP2 (via WW domains); inhibits the channel. Interacts with the full-length immature form of PCSK9 (pro-PCSK9). Interacts (N-glycosylated) with BPIFA1; the interaction is direct and inhibits the proteolytic processing of SCNN1A and SCNN1G and the activation of ENaC. In terms of processing, ubiquitinated. Can be ubiquitinated at multiple sites and undergo monoubiquitination and polyubiquitination. Ubiquitination by NEDD4 or NEDD4L inhibits the ENaC channel through endocytosis, intracellular retention and degradation of its individual subunits. However, some studies could not confirm the ubiquitination of this subunit of the ENaC. Phosphorylated on serine and threonine residues. Aldosterone and insulin increase the basal level of phosphorylation. Post-translationally, N-glycosylated. N-glycosylation is required for interaction with BPIFA1.

The protein localises to the apical cell membrane. It is found in the cytoplasmic vesicle membrane. It catalyses the reaction Na(+)(in) = Na(+)(out). Its activity is regulated as follows. Originally identified and characterized by its inhibition by the diuretic drug amiloride. Functionally, this is one of the three pore-forming subunits of the heterotrimeric epithelial sodium channel (ENaC), a critical regulator of sodium balance and fluid homeostasis. ENaC operates in epithelial tissues, where it mediates the electrodiffusion of sodium ions from extracellular fluid through the apical membrane of cells, with water following osmotically. It plays a key role in maintaining sodium homeostasis through electrogenic sodium reabsorption in the kidneys. Additionally, ENaC is essential for airway surface liquid homeostasis, which is crucial for proper mucus clearance. In Canis lupus familiaris (Dog), this protein is Epithelial sodium channel subunit beta.